The following is a 93-amino-acid chain: uncharacterized protein (93 aa).

Positions 41–62 (RSANRIPTTSSTSTSGTIPTTT) are disordered. Residues 46-62 (IPTTSSTSTSGTIPTTT) show a composition bias toward low complexity.

This is an uncharacterized protein from Dictyostelium discoideum (Social amoeba).